A 178-amino-acid polypeptide reads, in one-letter code: Cytochrome b6-f complex iron-sulfur subunit (178 aa).

A helical transmembrane segment spans residues 20 to 42 (LLTFGTATGVALGALYPVANFFM). A Rieske domain is found at 71–161 (NHPAGDRSLV…IDIDDDNVLV (91 aa)). Cys-107, His-109, Cys-125, and His-128 together coordinate [2Fe-2S] cluster. A disulfide bond links Cys-112 and Cys-127.

This sequence belongs to the Rieske iron-sulfur protein family. As to quaternary structure, the 4 large subunits of the cytochrome b6-f complex are cytochrome b6, subunit IV (17 kDa polypeptide, PetD), cytochrome f and the Rieske protein, while the 4 small subunits are PetG, PetL, PetM and PetN. The complex functions as a dimer. The cofactor is [2Fe-2S] cluster.

It localises to the cellular thylakoid membrane. It carries out the reaction 2 oxidized [plastocyanin] + a plastoquinol + 2 H(+)(in) = 2 reduced [plastocyanin] + a plastoquinone + 4 H(+)(out). In terms of biological role, component of the cytochrome b6-f complex, which mediates electron transfer between photosystem II (PSII) and photosystem I (PSI), cyclic electron flow around PSI, and state transitions. The polypeptide is Cytochrome b6-f complex iron-sulfur subunit (Prochlorococcus marinus (strain SARG / CCMP1375 / SS120)).